A 265-amino-acid chain; its full sequence is Deoxyribose-phosphate aldolase 2 (265 aa).

The Proton donor/acceptor role is filled by D108. Residue K173 is the Schiff-base intermediate with acetaldehyde of the active site. The active-site Proton donor/acceptor is the K207.

This sequence belongs to the DeoC/FbaB aldolase family. DeoC type 2 subfamily.

The protein resides in the cytoplasm. It catalyses the reaction 2-deoxy-D-ribose 5-phosphate = D-glyceraldehyde 3-phosphate + acetaldehyde. It functions in the pathway carbohydrate degradation; 2-deoxy-D-ribose 1-phosphate degradation; D-glyceraldehyde 3-phosphate and acetaldehyde from 2-deoxy-alpha-D-ribose 1-phosphate: step 2/2. Catalyzes a reversible aldol reaction between acetaldehyde and D-glyceraldehyde 3-phosphate to generate 2-deoxy-D-ribose 5-phosphate. This is Deoxyribose-phosphate aldolase 2 (deoC2) from Yersinia pestis.